The sequence spans 415 residues: Tyrosine--tRNA ligase (415 aa).

The short motif at 54–63 is the 'HIGH' region element; that stretch reads PTGSNIHLGH. The 'KMSKS' region motif lies at 248-252; it reads KMSKS. Residue Lys251 coordinates ATP. One can recognise an S4 RNA-binding domain in the interval 351-414; sequence AKAFYLFSAV…LGKKTFRRLV (64 aa).

This sequence belongs to the class-I aminoacyl-tRNA synthetase family. TyrS type 2 subfamily. Homodimer.

It is found in the cytoplasm. It catalyses the reaction tRNA(Tyr) + L-tyrosine + ATP = L-tyrosyl-tRNA(Tyr) + AMP + diphosphate + H(+). In terms of biological role, catalyzes the attachment of tyrosine to tRNA(Tyr) in a two-step reaction: tyrosine is first activated by ATP to form Tyr-AMP and then transferred to the acceptor end of tRNA(Tyr). This is Tyrosine--tRNA ligase from Synechococcus sp. (strain CC9605).